Reading from the N-terminus, the 292-residue chain is High-affinity heme uptake system protein IsdE (292 aa).

A signal peptide spans 1–19 (MRIIKYLTILVISVVILTS). C20 carries the N-palmitoyl cysteine lipid modification. Residue C20 is the site of S-diacylglycerol cysteine attachment. A Fe/B12 periplasmic-binding domain is found at 35–291 (RIVPTTVALT…QLYDLFYKDK (257 aa)). Heme is bound by residues V41, A42, S60, Y61, M78, and H229.

It belongs to the bacterial solute-binding protein 8 family. Heme b serves as cofactor.

The protein resides in the cell membrane. In terms of biological role, involved in heme (porphyrin) scavenging. Binds Fe(2+) and Fe(3+) heme but the largest fraction is Fe(2+) heme. Functions as a high-affinity heme binding protein and probably has a role in relaying heme-iron from cell wall-anchored isd proteins receptors to the probable permease IsdF. This is High-affinity heme uptake system protein IsdE (isdE) from Staphylococcus aureus (strain bovine RF122 / ET3-1).